A 616-amino-acid chain; its full sequence is Chaperone protein HscA (616 aa).

It belongs to the heat shock protein 70 family.

In terms of biological role, chaperone involved in the maturation of iron-sulfur cluster-containing proteins. Has a low intrinsic ATPase activity which is markedly stimulated by HscB. Involved in the maturation of IscU. This is Chaperone protein HscA from Salmonella arizonae (strain ATCC BAA-731 / CDC346-86 / RSK2980).